The primary structure comprises 418 residues: Gamma-glutamyl phosphate reductase (418 aa).

It belongs to the gamma-glutamyl phosphate reductase family.

The protein resides in the cytoplasm. The catalysed reaction is L-glutamate 5-semialdehyde + phosphate + NADP(+) = L-glutamyl 5-phosphate + NADPH + H(+). The protein operates within amino-acid biosynthesis; L-proline biosynthesis; L-glutamate 5-semialdehyde from L-glutamate: step 2/2. Functionally, catalyzes the NADPH-dependent reduction of L-glutamate 5-phosphate into L-glutamate 5-semialdehyde and phosphate. The product spontaneously undergoes cyclization to form 1-pyrroline-5-carboxylate. This chain is Gamma-glutamyl phosphate reductase, found in Pelodictyon phaeoclathratiforme (strain DSM 5477 / BU-1).